The sequence spans 340 residues: Dihydroorotate dehydrogenase (quinone) (340 aa).

FMN contacts are provided by residues Ala-62–Lys-66 and Thr-86. Residue Lys-66 participates in substrate binding. Residue Asn-111–Phe-115 participates in substrate binding. Positions 139 and 172 each coordinate FMN. Substrate is bound at residue Asn-172. Ser-175 functions as the Nucleophile in the catalytic mechanism. Asn-177 contacts substrate. 2 residues coordinate FMN: Lys-217 and Thr-245. Asn-246–Thr-247 serves as a coordination point for substrate. FMN is bound by residues Gly-268, Gly-297, and Tyr-318–Ser-319.

It belongs to the dihydroorotate dehydrogenase family. Type 2 subfamily. As to quaternary structure, monomer. The cofactor is FMN.

Its subcellular location is the cell membrane. It catalyses the reaction (S)-dihydroorotate + a quinone = orotate + a quinol. It participates in pyrimidine metabolism; UMP biosynthesis via de novo pathway; orotate from (S)-dihydroorotate (quinone route): step 1/1. Catalyzes the conversion of dihydroorotate to orotate with quinone as electron acceptor. The protein is Dihydroorotate dehydrogenase (quinone) of Alkalilimnicola ehrlichii (strain ATCC BAA-1101 / DSM 17681 / MLHE-1).